Here is a 272-residue protein sequence, read N- to C-terminus: Tail completion protein gp15 (272 aa).

Positions 240–272 (RDIDPEDWDGTVKQTFTSNVNRPTPPEPPGPRT) are disordered. Residues 251–260 (VKQTFTSNVN) are compositionally biased toward polar residues. The segment covering 262–272 (PTPPEPPGPRT) has biased composition (pro residues).

As to quaternary structure, hexamer. Interacts with gp3 and gp18 on the bottom part of the hexamer. Interacts with gp13 and gp14 on the top part of the hexamer.

The protein localises to the virion. Functionally, stabilizes the tail sheath structure and acts as a connector between the end of tail and the portal vertex of the capsid. In Enterobacteria phage T4 (Bacteriophage T4), this protein is Tail completion protein gp15 (15).